Here is a 372-residue protein sequence, read N- to C-terminus: NAD(P)H-quinone oxidoreductase subunit 1 (372 aa).

8 helical membrane passes run 29-49, 97-117, 130-150, 176-196, 204-224, 254-274, 308-328, and 347-367; these read WIPLPSFLMIIGATVGVLVVV, WLFTLGPVLVVLPVFVSYLIV, VGIFLWISLSSIAPIGLLMSG, LAFSVLAIAMMSNSLSTIDIV, ILGWNVWRQPVGLIIFWIAAL, FGLFYVGSYVNLVLSALVFAI, SLGITMTVLKAYFLVFIAVLL, and FLLPVSLVNLLLTAALKLAFP.

Belongs to the complex I subunit 1 family. NDH-1 is composed of at least 11 different subunits.

The protein localises to the cellular thylakoid membrane. The catalysed reaction is a plastoquinone + NADH + (n+1) H(+)(in) = a plastoquinol + NAD(+) + n H(+)(out). It catalyses the reaction a plastoquinone + NADPH + (n+1) H(+)(in) = a plastoquinol + NADP(+) + n H(+)(out). NDH-1 shuttles electrons from an unknown electron donor, via FMN and iron-sulfur (Fe-S) centers, to quinones in the respiratory and/or the photosynthetic chain. The immediate electron acceptor for the enzyme in this species is believed to be plastoquinone. Couples the redox reaction to proton translocation, and thus conserves the redox energy in a proton gradient. The sequence is that of NAD(P)H-quinone oxidoreductase subunit 1 from Rippkaea orientalis (strain PCC 8801 / RF-1) (Cyanothece sp. (strain PCC 8801)).